The following is a 297-amino-acid chain: Cell division protein FtsX (297 aa).

The Cytoplasmic portion of the chain corresponds to 1-21 (MRFGFLLNEVLTGFRRNVTMT). A helical transmembrane segment spans residues 22–42 (IAMILTTAISVGLFGGGMLVV). Residues 43 to 171 (RLADSSRAIY…LFAVLDGLSN (129 aa)) are Extracellular-facing. A helical membrane pass occupies residues 172–192 (AAFAVALVQAIGAILLIANMV). Residues 193–219 (QVAAYTRRTEIGIMRLVGASRWYTQLP) are Cytoplasmic-facing. The chain crosses the membrane as a helical span at residues 220 to 240 (FLVEAMLAATMGVGIAVAGLM). Topologically, residues 241–267 (VVRALFLENALNQFYQANLIAKVDYAD) are extracellular. A helical membrane pass occupies residues 268 to 288 (ILFITPWLLLLGVAMSGLTAY). The Cytoplasmic segment spans residues 289 to 297 (LTLRLYVRR).

Belongs to the ABC-4 integral membrane protein family. FtsX subfamily. As to quaternary structure, forms a membrane-associated complex with FtsE.

The protein localises to the cell membrane. Functionally, part of the ABC transporter FtsEX involved in cellular division. The chain is Cell division protein FtsX from Mycobacterium tuberculosis (strain ATCC 25177 / H37Ra).